The chain runs to 118 residues: Large ribosomal subunit protein uL18 (118 aa).

This sequence belongs to the universal ribosomal protein uL18 family. In terms of assembly, part of the 50S ribosomal subunit; part of the 5S rRNA/L5/L18/L25 subcomplex. Contacts the 5S and 23S rRNAs.

Functionally, this is one of the proteins that bind and probably mediate the attachment of the 5S RNA into the large ribosomal subunit, where it forms part of the central protuberance. This Phenylobacterium zucineum (strain HLK1) protein is Large ribosomal subunit protein uL18.